The primary structure comprises 130 residues: Small ribosomal subunit protein uS11 (130 aa).

The protein belongs to the universal ribosomal protein uS11 family. As to quaternary structure, part of the 30S ribosomal subunit. Interacts with proteins S7 and S18. Binds to IF-3.

Located on the platform of the 30S subunit, it bridges several disparate RNA helices of the 16S rRNA. Forms part of the Shine-Dalgarno cleft in the 70S ribosome. The sequence is that of Small ribosomal subunit protein uS11 from Nitrobacter hamburgensis (strain DSM 10229 / NCIMB 13809 / X14).